Consider the following 528-residue polypeptide: Tyrosine--tRNA ligase, cytoplasmic (528 aa).

M1 is modified (N-acetylmethionine). The residue at position 2 (G2) is an N-acetylglycine; in Tyrosine--tRNA ligase, cytoplasmic, N-terminally processed. An L-tyrosine-binding site is contributed by Y39. Residue Y39 participates in trans-resveratrol binding. Residues 44–52 (TTGKPHVAY) carry the 'HIGH' region motif. Y166, Q170, D173, and Q188 together coordinate L-tyrosine. Residues Q170 and D173 each coordinate trans-resveratrol. At K197 the chain carries N6-acetyllysine. S205 is modified (phosphoserine). N6-acetyllysine is present on K206. The 'KMSKS' region motif lies at 222–226 (KMSSS). Positions 242 to 247 (KKKLKK) match the Nuclear localization signal motif. The tract at residues 339–363 (AAYPDPSKQKPPAKGPAKNSEPEEV) is disordered. Residues 364–468 (IPSRLDIRVG…AGSAPGERVF (105 aa)) form the tRNA-binding domain. Position 386 is a phosphoserine (S386). N6-acetyllysine is present on residues K474, K482, and K490.

It belongs to the class-I aminoacyl-tRNA synthetase family. In terms of assembly, homodimer. Interacts (when binding to resveratrol) with PARP1; interaction stimulates the poly-ADP-ribosyltransferase activity of PARP1.

The protein localises to the cytoplasm. It localises to the nucleus. The catalysed reaction is tRNA(Tyr) + L-tyrosine + ATP = L-tyrosyl-tRNA(Tyr) + AMP + diphosphate + H(+). Resveratrol strongly inhibits the tyrosine--tRNA ligase activity. Tyrosine--tRNA ligase that catalyzes the attachment of tyrosine to tRNA(Tyr) in a two-step reaction: tyrosine is first activated by ATP to form Tyr-AMP and then transferred to the acceptor end of tRNA(Tyr). Also acts as a positive regulator of poly-ADP-ribosylation in the nucleus, independently of its tyrosine--tRNA ligase activity. Activity is switched upon resveratrol-binding: resveratrol strongly inhibits the tyrosine--tRNA ligase activity and promotes relocalization to the nucleus, where YARS1 specifically stimulates the poly-ADP-ribosyltransferase activity of PARP1. The protein is Tyrosine--tRNA ligase, cytoplasmic (Yars1) of Mus musculus (Mouse).